We begin with the raw amino-acid sequence, 325 residues long: MVGSMENPGSWGLACLLISTSRFNRYMPYYTMMAAVWSTLIAGALKLQEDPASLSVEYILFKAGLCFVHCLLLCGAGNTWNDLIDRDIDARVERTKMRPLASGKVSTVEALVWMVGQYFLSVKMLDLILDNRSIWGLMLPLTASIMLYPYLKRPVFSRVFIYPQYILGLAVAYPSITGWASINGQEQSMSEIFTHCTPICLLIFFWCLYFNTAYSHQDSVDDRKMNINSAYVVAGQRIRLFLAFLGALPLAVIPYVVLKINSPWLWFSWMAVWTVSIVMQIVRFDSKKLESGGRIHWDNFLLGLWTTVACIVEVGLQKVEFWNLI.

A run of 3 helical transmembrane segments spans residues Met27–Leu47, Val56–Ala76, and Val108–Ile128. Residue Asn131 is glycosylated (N-linked (GlcNAc...) asparagine). A run of 6 helical transmembrane segments spans residues Ile134–Leu151, Val159–Trp179, Ile192–Thr212, Leu240–Ile260, Ser262–Val282, and Ile295–Gly315.

Belongs to the UbiA prenyltransferase family. Requires Mg(2+) as cofactor.

It is found in the golgi apparatus membrane. It carries out the reaction 5,7-dihydroxy-4-methylphthalide + (2E,6E)-farnesyl diphosphate = 4-farnesyl-3,5-dihydroxy-6-methylphthalide + diphosphate. It functions in the pathway secondary metabolite biosynthesis; terpenoid biosynthesis. Polyprenyl transferase; part of the gene cluster that mediates the biosynthesis of mycophenolic acid (MPA), the first isolated antibiotic natural product in the world obtained from a culture of Penicillium brevicompactum in 1893. MpaA is a Golgi apparatus-associated enzyme that catalyzes the prenylation of 5,7-dihydroxy-4,6-dimethylphthalide (DHMP) to yield farnesyl-DHMP (FDHMP). The first step of the pathway is the synthesis of 5-methylorsellinic acid (5MOA) by the cytosolic polyketide synthase mpaC. 5MOA is then converted to the phthalide compound 5,7-dihydroxy-4,6-dimethylphthalide (DHMP) by the endoplasmic reticulum-bound cytochrome P450 monooxygenase mpaDE. MpaDE first catalyzes hydroxylation of 5-MOA to 4,6-dihydroxy-2-(hydroxymethyl)-3-methylbenzoic acid (DHMB). MpaDE then acts as a lactone synthase that catalyzes the ring closure to convert DHMB into DHMP. The next step is the prenylation of DHMP by the Golgi apparatus-associated prenyltransferase mpaA to yield farnesyl-DHMP (FDHMP). The ER-bound oxygenase mpaB then mediates the oxidative cleavage the C19-C20 double bond in FDHMP to yield FDHMP-3C via a mycophenolic aldehyde intermediate. The O-methyltransferase mpaG catalyzes the methylation of FDHMP-3C to yield MFDHMP-3C. After the cytosolic methylation of FDHMP-3C, MFDHMP-3C enters into peroxisomes probably via free diffusion due to its low molecular weight. Upon a peroxisomal CoA ligation reaction, catalyzed by a beta-oxidation component enzyme acyl-CoA ligase ACL891, MFDHMP-3C-CoA would then be restricted to peroxisomes for the following beta-oxidation pathway steps. The peroxisomal beta-oxidation machinery than converts MFDHMP-3C-CoA into MPA_CoA, via a beta-oxidation chain-shortening process. Finally mpaH acts as a peroxisomal acyl-CoA hydrolase with high substrate specificity toward MPA-CoA to release the final product MPA. The protein is Polyprenyl transferase mpaA of Penicillium roqueforti (strain FM164).